We begin with the raw amino-acid sequence, 329 residues long: NAD(P)H-dependent D-xylose reductase (329 aa).

The Proton donor role is filled by Tyr52. Residue His114 participates in substrate binding. NAD(+) is bound by residues 173–174 (SN), 222–231 (SSFGPVSFLE), and 278–288 (KSSKKERLLDN).

This sequence belongs to the aldo/keto reductase family.

It carries out the reaction xylitol + NAD(+) = D-xylose + NADH + H(+). The enzyme catalyses xylitol + NADP(+) = D-xylose + NADPH + H(+). It participates in carbohydrate metabolism; D-xylose degradation. Reduces D-xylose into xylitol. The protein is NAD(P)H-dependent D-xylose reductase (XYL1) of Kluyveromyces lactis (strain ATCC 8585 / CBS 2359 / DSM 70799 / NBRC 1267 / NRRL Y-1140 / WM37) (Yeast).